The sequence spans 224 residues: ATP phosphoribosyltransferase (224 aa).

This sequence belongs to the ATP phosphoribosyltransferase family. Short subfamily. Heteromultimer composed of HisG and HisZ subunits.

It localises to the cytoplasm. The enzyme catalyses 1-(5-phospho-beta-D-ribosyl)-ATP + diphosphate = 5-phospho-alpha-D-ribose 1-diphosphate + ATP. Its pathway is amino-acid biosynthesis; L-histidine biosynthesis; L-histidine from 5-phospho-alpha-D-ribose 1-diphosphate: step 1/9. In terms of biological role, catalyzes the condensation of ATP and 5-phosphoribose 1-diphosphate to form N'-(5'-phosphoribosyl)-ATP (PR-ATP). Has a crucial role in the pathway because the rate of histidine biosynthesis seems to be controlled primarily by regulation of HisG enzymatic activity. The polypeptide is ATP phosphoribosyltransferase (Cupriavidus necator (strain ATCC 17699 / DSM 428 / KCTC 22496 / NCIMB 10442 / H16 / Stanier 337) (Ralstonia eutropha)).